The chain runs to 1350 residues: MRPGEESQLVPKEIENAADEPRVLCIVQDTTNCKSVNERITLNLPASTSVKQLYEDVSNKAGYVSSTFSLMWGNGASNTDMAALDPTPDRTLQEAGFEAGKKNFLHLTDKDGEQPQLTSDESGTADSSGLDDSSQEKFIGPLPREESVAGTSNYVSQNYSYSSLLSKSDTGYVGLVNQAMTCYLNSLLQTLFMTPEFRNALYKWEFEESEEDPVSSIPYQLQRLFVLLQTSKKRAIETTDVTRSFGWDSSEAWQQHDVQELCRVMFDALEQKWKQTEQADLINQLYQGKLKDYVKCLECGYESWRIDTFLDIPLVIRPYGSNTAFGSMEEALHAFIQPETLDGPNQYFCERCKRKCDARKGLKFLHFPYLLTLQLKRFDFDYTSMHRIKLNDRMTFPDELDMSPFIDMEDEKSPQTDSCTDSGAENEGSCHSDQMSNDFSTDDAVDEGICLETNSNIEKLNKSVAEKNSLYELFSVMVHSGSAAGGHYYACIKSFADGQWYSFNDQHVSRITQEDIKKTYGGATGNRGYYSSAFASSTNAYMLMYRLKNPARNAQFLEASEFPEHIKLLVQKEQEQEEQEKRQREIERNTCKLKLFCMHPVKQIMMESKLEVHKDKTMKEAVEIANKLMDLEGVIPLDCCRLVKYDEFHDYLERSYEDEEDRTMGYLLGGVKSSYMFDLLLETKRPDQVFQSYKPGEVMVKVYVVDLKTETVASPVSVRAYLSQTIIEFKQLISKSVDLPPDSMRVILERCYNDLRLLNVANKTLKAEGFFRSNKVFVESSDSLDHQLVFTDSHLWKLLDRHANTIKLYVSLPEHPRPTARSVGPKGGGDMNPQEDYCSRAKSVDAILEESTEKLKSLSLQQHQDGGNGDSSKSTEGSDFENIDSPLNEVDSSGSADNRELENRILPADPENNFQPEERSDSDVNNDRSTSSVDSDILSSSHSSDTLCNADGTPIPLANGLDSHSITSSRRSKANDGKKETWDTAEEDSGTDSEYDESGKSRGEAQYMYFKAEPHAGEGCLAEGSKCLLVNVDKRITLAAFKQQLESFVGVPSSQFKVFRVYASNQEFESVRLNETLSSFSDDNKITIRLGRALKKGEYRVKIFQLLVNEPEPCKFVLDAVFSKGMTVRQSKEELLPLLREQCGLDLSIDRFRLRKKTWKNPGTVFLDSHVYENESISSCWEVLLEALDETEKMKSMSQLSLFTKRWRPSELKLDPFKEVVLESNSVEELRDKICEISAIPLENLEFAKGRGTFPCDISVLEIHQDLDWNPKVSTLNAWPLYISDDGAVIFYRDKTEEVMELTDEQRNELVKKESSRLQKTGHRVTYSPRKEKALKIYLDGPTNKDSAQD.

A disordered region spans residues 111-138 (DGEQPQLTSDESGTADSSGLDDSSQEKF). Residues 115–132 (PQLTSDESGTADSSGLDD) show a composition bias toward polar residues. A USP domain is found at 173–548 (VGLVNQAMTC…NAYMLMYRLK (376 aa)). The Nucleophile role is filled by cysteine 182. Residues 409–437 (EDEKSPQTDSCTDSGAENEGSCHSDQMSN) are disordered. The span at 415–437 (QTDSCTDSGAENEGSCHSDQMSN) shows a compositional bias: polar residues. Histidine 487 (proton acceptor) is an active-site residue. Disordered stretches follow at residues 815-836 (HPRPTARSVGPKGGGDMNPQED) and 859-1000 (SLQQ…ESGK). Residues 859 to 877 (SLQQHQDGGNGDSSKSTEG) are compositionally biased toward polar residues. Over residues 916–926 (PEERSDSDVNN) the composition is skewed to basic and acidic residues. Residues 929–945 (STSSVDSDILSSSHSSD) are compositionally biased toward low complexity. The segment covering 973-982 (KANDGKKETW) has biased composition (basic and acidic residues). Acidic residues predominate over residues 983-996 (DTAEEDSGTDSEYD).

It belongs to the peptidase C19 family. USP47 subfamily.

It is found in the cytoplasm. The enzyme catalyses Thiol-dependent hydrolysis of ester, thioester, amide, peptide and isopeptide bonds formed by the C-terminal Gly of ubiquitin (a 76-residue protein attached to proteins as an intracellular targeting signal).. In terms of biological role, ubiquitin-specific protease that specifically deubiquitinates monoubiquitinated DNA polymerase beta (polb), stabilizing polb thereby playing a role in base-excision repair (BER). The chain is Ubiquitin carboxyl-terminal hydrolase 47 (usp47) from Xenopus laevis (African clawed frog).